Reading from the N-terminus, the 320-residue chain is Malate dehydrogenase (320 aa).

NAD(+)-binding positions include 10 to 15 (GAGNIG) and Asp-34. The substrate site is built by Arg-83 and Arg-89. Residues Asn-96 and 119 to 121 (ITN) each bind NAD(+). Substrate-binding residues include Asn-121 and Arg-152. Residue His-176 is the Proton acceptor of the active site.

The protein belongs to the LDH/MDH superfamily. MDH type 3 family.

The catalysed reaction is (S)-malate + NAD(+) = oxaloacetate + NADH + H(+). Catalyzes the reversible oxidation of malate to oxaloacetate. This is Malate dehydrogenase from Sphingopyxis alaskensis (strain DSM 13593 / LMG 18877 / RB2256) (Sphingomonas alaskensis).